The sequence spans 101 residues: Large ribosomal subunit protein uL24 (101 aa).

The protein belongs to the universal ribosomal protein uL24 family. As to quaternary structure, part of the 50S ribosomal subunit.

Its function is as follows. One of two assembly initiator proteins, it binds directly to the 5'-end of the 23S rRNA, where it nucleates assembly of the 50S subunit. Functionally, one of the proteins that surrounds the polypeptide exit tunnel on the outside of the subunit. In Borrelia recurrentis (strain A1), this protein is Large ribosomal subunit protein uL24.